Consider the following 288-residue polypeptide: Phosphatidylglycerol--prolipoprotein diacylglyceryl transferase (288 aa).

4 consecutive transmembrane segments (helical) span residues 8–28, 49–69, 79–99, and 109–129; these read IGPI…FVGI, AFVA…LFNL, ILAV…GIAG, and INPL…QAIG. A 1,2-diacyl-sn-glycero-3-phospho-(1'-sn-glycerol) is bound at residue R130. 3 helical membrane passes run 203 to 223, 232 to 252, and 259 to 279; these read PAML…WFIL, GYMW…VSFF, and FFNF…SIFF.

Belongs to the Lgt family.

The protein localises to the cell inner membrane. The enzyme catalyses L-cysteinyl-[prolipoprotein] + a 1,2-diacyl-sn-glycero-3-phospho-(1'-sn-glycerol) = an S-1,2-diacyl-sn-glyceryl-L-cysteinyl-[prolipoprotein] + sn-glycerol 1-phosphate + H(+). It functions in the pathway protein modification; lipoprotein biosynthesis (diacylglyceryl transfer). In terms of biological role, catalyzes the transfer of the diacylglyceryl group from phosphatidylglycerol to the sulfhydryl group of the N-terminal cysteine of a prolipoprotein, the first step in the formation of mature lipoproteins. This is Phosphatidylglycerol--prolipoprotein diacylglyceryl transferase from Fusobacterium nucleatum subsp. nucleatum (strain ATCC 25586 / DSM 15643 / BCRC 10681 / CIP 101130 / JCM 8532 / KCTC 2640 / LMG 13131 / VPI 4355).